Here is a 233-residue protein sequence, read N- to C-terminus: Octanoyltransferase (233 aa).

A BPL/LPL catalytic domain is found at 38–218 (AGGPDTLLLL…AVCDALDGVL (181 aa)). Basic and acidic residues predominate over residues 57–66 (RRTEPHERPL). Residues 57–77 (RRTEPHERPLDGTPVVDTDRG) are disordered. Residues 76–83 (RGGKITWH), 148–150 (AIG), and 161–163 (GFA) each bind substrate. The active-site Acyl-thioester intermediate is the C179.

Belongs to the LipB family.

It is found in the cytoplasm. The enzyme catalyses octanoyl-[ACP] + L-lysyl-[protein] = N(6)-octanoyl-L-lysyl-[protein] + holo-[ACP] + H(+). It functions in the pathway protein modification; protein lipoylation via endogenous pathway; protein N(6)-(lipoyl)lysine from octanoyl-[acyl-carrier-protein]: step 1/2. Functionally, catalyzes the transfer of endogenously produced octanoic acid from octanoyl-acyl-carrier-protein onto the lipoyl domains of lipoate-dependent enzymes. Lipoyl-ACP can also act as a substrate although octanoyl-ACP is likely to be the physiological substrate. The sequence is that of Octanoyltransferase from Mycolicibacterium paratuberculosis (strain ATCC BAA-968 / K-10) (Mycobacterium paratuberculosis).